An 89-amino-acid chain; its full sequence is ATP synthase subunit c (89 aa).

Transmembrane regions (helical) follow at residues 3–23 and 53–73; these read IILG…AIGA and FILA…ALMF.

This sequence belongs to the ATPase C chain family. In terms of assembly, F-type ATPases have 2 components, F(1) - the catalytic core - and F(0) - the membrane proton channel. F(1) has five subunits: alpha(3), beta(3), gamma(1), delta(1), epsilon(1). F(0) has three main subunits: a(1), b(2) and c(10-14). The alpha and beta chains form an alternating ring which encloses part of the gamma chain. F(1) is attached to F(0) by a central stalk formed by the gamma and epsilon chains, while a peripheral stalk is formed by the delta and b chains.

Its subcellular location is the cell inner membrane. In terms of biological role, f(1)F(0) ATP synthase produces ATP from ADP in the presence of a proton or sodium gradient. F-type ATPases consist of two structural domains, F(1) containing the extramembraneous catalytic core and F(0) containing the membrane proton channel, linked together by a central stalk and a peripheral stalk. During catalysis, ATP synthesis in the catalytic domain of F(1) is coupled via a rotary mechanism of the central stalk subunits to proton translocation. Its function is as follows. Key component of the F(0) channel; it plays a direct role in translocation across the membrane. A homomeric c-ring of between 10-14 subunits forms the central stalk rotor element with the F(1) delta and epsilon subunits. In Verminephrobacter eiseniae (strain EF01-2), this protein is ATP synthase subunit c.